The following is a 314-amino-acid chain: tRNA dimethylallyltransferase (314 aa).

14 to 21 lines the ATP pocket; it reads GPTASGKT. A substrate-binding site is contributed by 16 to 21; the sequence is TASGKT. 3 interaction with substrate tRNA regions span residues 39–42, 163–167, and 245–250; these read DSAQ, QRLQR, and RCVGYR.

The protein belongs to the IPP transferase family. In terms of assembly, monomer. Requires Mg(2+) as cofactor.

It carries out the reaction adenosine(37) in tRNA + dimethylallyl diphosphate = N(6)-dimethylallyladenosine(37) in tRNA + diphosphate. Its function is as follows. Catalyzes the transfer of a dimethylallyl group onto the adenine at position 37 in tRNAs that read codons beginning with uridine, leading to the formation of N6-(dimethylallyl)adenosine (i(6)A). The polypeptide is tRNA dimethylallyltransferase (Dechloromonas aromatica (strain RCB)).